The sequence spans 190 residues: DNA dC-&gt;dU-editing enzyme APOBEC-3C (190 aa).

The CMP/dCMP-type deaminase domain occupies 29-138; that stretch reads DRNETWLCFT…PCYQEGLRSL (110 aa). The (Microbial infection) Required for interaction with human foamy virus protein Bet stretch occupies residues 40–86; that stretch reads EGIKRRSVVSWKTGVFRNQVDSETHCHAERCFLSWFCDDILSPNTKY. His-66 serves as a coordination point for Zn(2+). The Proton donor role is filled by Glu-68. Residues Cys-97 and Cys-100 each coordinate Zn(2+).

The protein belongs to the cytidine and deoxycytidylate deaminase family. In terms of assembly, homodimer. Interacts with TRIB3. Interacts with AGO2. As to quaternary structure, (Microbial infection) Interacts with human foamy virus protein Bet; this interaction does not induce APOBEC3C degradation but prevents its dimerization and incorporation into the virion by binding of Bet close to or within the APOBEC3C dimerization site. (Microbial infection) Interacts with HIV-1 Vif. Zn(2+) is required as a cofactor. In terms of tissue distribution, expressed in spleen, testes, peripherical blood lymphocytes, heart, thymus, prostate and ovary.

It is found in the nucleus. The protein resides in the cytoplasm. The catalysed reaction is a 2'-deoxycytidine in single-stranded DNA + H2O + H(+) = a 2'-deoxyuridine in single-stranded DNA + NH4(+). (Microbial infection) Antiviral activity is neutralized by the HIV-1 virion infectivity factor (Vif), that prevents its incorporation into progeny HIV-1 virions by both inhibiting its translation and/or by inducing its ubiquitination and subsequent degradation by the 26S proteasome. Functionally, DNA deaminase (cytidine deaminase) which acts as an inhibitor of retrovirus replication and retrotransposon mobility via deaminase-dependent and -independent mechanisms. After the penetration of retroviral nucleocapsids into target cells of infection and the initiation of reverse transcription, it can induce the conversion of cytosine to uracil in the minus-sense single-strand viral DNA, leading to G-to-A hypermutations in the subsequent plus-strand viral DNA. The resultant detrimental levels of mutations in the proviral genome, along with a deamination-independent mechanism that works prior to the proviral integration, together exert efficient antiretroviral effects in infected target cells. Selectively targets single-stranded DNA and does not deaminate double-stranded DNA or single- or double-stranded RNA. Exhibits antiviral activity against simian immunodeficiency virus (SIV), hepatitis B virus (HBV), herpes simplex virus 1 (HHV-1) and Epstein-Barr virus (EBV) and may inhibit the mobility of LTR and non-LTR retrotransposons. May also play a role in the epigenetic regulation of gene expression through the process of active DNA demethylation. This is DNA dC-&gt;dU-editing enzyme APOBEC-3C (APOBEC3C) from Homo sapiens (Human).